The chain runs to 328 residues: Sin3 histone deacetylase corepressor complex component SDS3 (328 aa).

The segment covering 1–16 has biased composition (low complexity); the sequence is MSAAGLLAPAPAQAGA. The segment at 1–65 is disordered; the sequence is MSAAGLLAPA…DLAKHDEEDY (65 aa). N-acetylserine is present on serine 2. Residues 2 to 170 form a mediates interaction with USP17L2 region; sequence SAAGLLAPAP…IENEKLTMEL (169 aa). Acidic residues-rich tracts occupy residues 23–37 and 45–54; these read YPEE…EEDE and SDEDTEDASE. Phosphoserine is present on residues serine 32 and serine 45. Position 49 is a phosphothreonine (threonine 49). Residue serine 53 is modified to Phosphoserine. Over residues 56–65 the composition is skewed to basic and acidic residues; sequence DLAKHDEEDY. A coiled-coil region spans residues 66 to 171; it reads VEMKEQMYQD…ENEKLTMELT (106 aa). Residues lysine 69, lysine 178, and lysine 201 each participate in a glycyl lysine isopeptide (Lys-Gly) (interchain with G-Cter in SUMO2) cross-link. A sin3 interaction domain (SID) region spans residues 188 to 226; sequence RPNDPVPIPDKRRKPAPAQLNYLLTDEQIMEDLRTLNKL. The segment at 226–252 is disordered; it reads LKSPKRPASPSSPEHLPATPAESPAQR. Phosphoserine occurs at positions 228, 234, and 237. Phosphothreonine is present on threonine 244.

The protein belongs to the SDS3 family. In terms of assembly, interacts with HCFC1. Homodimer. Component of the SIN3 histone deacetylase (HDAC) corepressor complex. Interacts with SIN3A. Interaction with SIN3B enhances the interaction between SIN3B and HDAC1 to form a complex. Component of a mSin3A corepressor complex that contains SIN3A, SAP130, SUDS3/SAP45, ARID4B/SAP180, HDAC1 and HDAC2. Interacts with USP17L2; the interaction is direct. Interacts with FOXK2. Polyubiquitinated. 'Lys-63'-polyubiquitinated SUDS3 positively regulates histone deacetylation. Regulated through deubiquitination by USP17L2/USP17 that cleaves 'Lys-63'-linked ubiquitin chains.

Its subcellular location is the nucleus. In terms of biological role, regulatory protein which represses transcription and augments histone deacetylase activity of HDAC1. May have a potential role in tumor suppressor pathways through regulation of apoptosis. May function in the assembly and/or enzymatic activity of the mSin3A corepressor complex or in mediating interactions between the complex and other regulatory complexes. This Pongo abelii (Sumatran orangutan) protein is Sin3 histone deacetylase corepressor complex component SDS3 (SUDS3).